Consider the following 234-residue polypeptide: Mediator of RNA polymerase II transcription subunit 4 (234 aa).

Positions 71 to 124 form a coiled coil; the sequence is HQEAYRRLVEKKNEVAGLEMRVRGLVKRLEEGRKELEGMIDQGERSLEDIQKSE. Residues 188 to 234 form a disordered region; it reads GVVGEEQKAPQKVEERREHVEHEESGRRYDPNAVFQLDLNSDESDED. Residues 189-217 are compositionally biased toward basic and acidic residues; sequence VVGEEQKAPQKVEERREHVEHEESGRRYD.

This sequence belongs to the Mediator complex subunit 4 family. In terms of assembly, component of the Mediator complex.

The protein localises to the nucleus. Component of the Mediator complex, a coactivator involved in the regulated transcription of nearly all RNA polymerase II-dependent genes. Mediator functions as a bridge to convey information from gene-specific regulatory proteins to the basal RNA polymerase II transcription machinery. Mediator is recruited to promoters by direct interactions with regulatory proteins and serves as a scaffold for the assembly of a functional preinitiation complex with RNA polymerase II and the general transcription factors. This chain is Mediator of RNA polymerase II transcription subunit 4 (MED4), found in Cryptococcus neoformans var. neoformans serotype D (strain B-3501A) (Filobasidiella neoformans).